Here is a 66-residue protein sequence, read N- to C-terminus: Large ribosomal subunit protein eL24 (66 aa).

Residues Cys-7, Cys-10, Cys-33, and Cys-37 each contribute to the Zn(2+) site. A C4-type zinc finger spans residues 7–37 (CSYCGKPFEPGTGKMYVRNDGRVLFFCSRKC).

Belongs to the eukaryotic ribosomal protein eL24 family. In terms of assembly, part of the 50S ribosomal subunit. Forms a cluster with proteins L3 and L14. Requires Zn(2+) as cofactor.

In terms of biological role, binds to the 23S rRNA. This is Large ribosomal subunit protein eL24 from Pyrococcus furiosus (strain ATCC 43587 / DSM 3638 / JCM 8422 / Vc1).